The following is a 193-amino-acid chain: Rho-related protein racF2 (193 aa).

10–17 (GDGAVGKT) contacts GTP. Positions 32–40 (YLPTVFDNY) match the Effector region motif. GTP-binding positions include 57 to 61 (DTAGQ) and 115 to 118 (TKQD). Cys190 carries the cysteine methyl ester modification. Cys190 is lipidated: S-geranylgeranyl cysteine. Positions 191–193 (TIM) are cleaved as a propeptide — removed in mature form.

This sequence belongs to the small GTPase superfamily. Rho family.

Its subcellular location is the cell membrane. This is Rho-related protein racF2 (racF2) from Dictyostelium discoideum (Social amoeba).